We begin with the raw amino-acid sequence, 89 residues long: Small ribosomal subunit protein uS15 (89 aa).

This sequence belongs to the universal ribosomal protein uS15 family. In terms of assembly, part of the 30S ribosomal subunit. Forms a bridge to the 50S subunit in the 70S ribosome, contacting the 23S rRNA.

In terms of biological role, one of the primary rRNA binding proteins, it binds directly to 16S rRNA where it helps nucleate assembly of the platform of the 30S subunit by binding and bridging several RNA helices of the 16S rRNA. Its function is as follows. Forms an intersubunit bridge (bridge B4) with the 23S rRNA of the 50S subunit in the ribosome. This chain is Small ribosomal subunit protein uS15, found in Porphyromonas gingivalis (strain ATCC 33277 / DSM 20709 / CIP 103683 / JCM 12257 / NCTC 11834 / 2561).